Here is a 192-residue protein sequence, read N- to C-terminus: Ion-translocating oxidoreductase complex subunit B (192 aa).

A hydrophobic region spans residues 1-26 (MNAIWIAVAAVSLLGLAFGAILGYAS). The region spanning 32-91 (EDDPVVEKIDEILPQSQCGQCGYPGCRPYAEAISCNGEKINRCAPGGEAVMLKIAELLNV) is the 4Fe-4S domain. C49, C52, C57, C74, C117, C120, C123, C127, C147, C150, C153, and C157 together coordinate [4Fe-4S] cluster. 4Fe-4S ferredoxin-type domains lie at 108 to 137 (MVAVIDENNCIGCTKCIQACPVDAIVGATR) and 138 to 167 (AMHTVMSDLCTGCNLCVDPCPTHCISLQPV).

It belongs to the 4Fe4S bacterial-type ferredoxin family. RnfB subfamily. In terms of assembly, the complex is composed of six subunits: RsxA, RsxB, RsxC, RsxD, RsxE and RsxG. [4Fe-4S] cluster is required as a cofactor.

Its subcellular location is the cell inner membrane. Its function is as follows. Part of a membrane-bound complex that couples electron transfer with translocation of ions across the membrane. Required to maintain the reduced state of SoxR. The protein is Ion-translocating oxidoreductase complex subunit B of Shigella dysenteriae serotype 1 (strain Sd197).